The following is a 55-amino-acid chain: Metallothionein-1 (55 aa).

Belongs to the metallothionein superfamily. Type 11 family.

This Yarrowia lipolytica (strain CLIB 122 / E 150) (Yeast) protein is Metallothionein-1 (MTP1).